The sequence spans 374 residues: MSANDFKPETWTSSANEALRVSIVGENAVQFSPLFTYPIYGDSEKIYGYKDLIIHLAFDSVTFKPYVNVKYSAKLGDDNIVDVEKKLLSFLPKDDVIVRDEAKWVDCFAEERKTHNLSDVFEKVSEYSLNGEEFVVYKSSLVDDFARRMHRRVQIFSLLFIEAANYIDETDPSWQIYWLLNKKTKELIGFVTTYKYWHYLGAKSFDEDIDKKFRAKISQFLIFPPYQNKGHGSCLYEAIIQSWLEDKSITEITVEDPNEAFDDLRDRNDIQRLRKLGYDAVFQKHSDLSDEFLESSRKSLKLEERQFNRLVEMLLLLNNSPSFELKVKNRLYIKNYDALDQTDPEKAREALQNSFILVKDDYRRIIESINKSQG.

2 interaction with histone H4 N-terminus regions span residues 42-44 and 194-196; these read DSE and YKY. The N-acetyltransferase domain maps to 135 to 303; the sequence is VVYKSSLVDD…ESSRKSLKLE (169 aa). Residues 197 to 205 are interaction with HAT2; the sequence is WHYLGAKSF. Acetyl-CoA is bound by residues 220-222 and 227-233; these read FLI and QNKGHGS. Glu255 acts as the Proton donor/acceptor in catalysis. 2 residues coordinate acetyl-CoA: Asn258 and Arg267. Ser354 carries the phosphoserine modification.

Belongs to the HAT1 family. As to quaternary structure, component of the HAT-B complex composed of at least HAT1 and HAT2. In the cytoplasm, this complex binds to the histone H4 tail. In the nucleus, the HAT-B complex has an additional component, the histone H3/H4 chaperone HIF1.

The protein localises to the cytoplasm. It is found in the nucleus. It catalyses the reaction L-lysyl-[protein] + acetyl-CoA = N(6)-acetyl-L-lysyl-[protein] + CoA + H(+). Its function is as follows. Catalytic component of the histone acetylase B (HAT-B) complex. Acetylates 'Lys-12' of free histone H4 in the cytoplasm. The complex is also found in the nucleus, however it is not certain that it modifies histone H4 when packaged in chromatin. Histone H4 'Lys-12' acetylation is required for telomeric silencing. Has intrinsic substrate specificity that modifies lysine in recognition sequence GXGKXG. Involved in DNA double-strand break repair. The protein is Histone acetyltransferase type B catalytic subunit (HAT1) of Saccharomyces cerevisiae (strain ATCC 204508 / S288c) (Baker's yeast).